The sequence spans 490 residues: Betaine aldehyde dehydrogenase (490 aa).

3 residues coordinate K(+): Thr26, Ile27, and Asp93. 150-152 (GAW) is a binding site for NAD(+). The active-site Charge relay system is Lys162. 176–179 (KPSE) is an NAD(+) binding site. Val180 contributes to the K(+) binding site. 230–233 (GVAS) serves as a coordination point for NAD(+). Leu246 is a K(+) binding site. Residue Glu252 is the Proton acceptor of the active site. Positions 254, 286, and 387 each coordinate NAD(+). The Nucleophile role is filled by Cys286. Residue Cys286 is modified to Cysteine sulfenic acid (-SOH). Residues Lys457 and Gly460 each contribute to the K(+) site. Residue Glu464 is the Charge relay system of the active site.

It belongs to the aldehyde dehydrogenase family. As to quaternary structure, dimer of dimers. Requires K(+) as cofactor.

It carries out the reaction betaine aldehyde + NAD(+) + H2O = glycine betaine + NADH + 2 H(+). The protein operates within amine and polyamine biosynthesis; betaine biosynthesis via choline pathway; betaine from betaine aldehyde: step 1/1. Involved in the biosynthesis of the osmoprotectant glycine betaine. Catalyzes the irreversible oxidation of betaine aldehyde to the corresponding acid. The protein is Betaine aldehyde dehydrogenase of Shigella flexneri serotype 5b (strain 8401).